A 664-amino-acid chain; its full sequence is Methionine--tRNA ligase (664 aa).

Positions 13–23 match the 'HIGH' region motif; it reads PYTNGPCHLGH. Positions 144, 147, 156, and 160 each coordinate Zn(2+). A 'KMSKS' region motif is present at residues 327–331; the sequence is KFSKS. Position 330 (Lys330) interacts with ATP. The tRNA-binding domain occupies 566-664; the sequence is EFAKVEMKTG…TPVPSGTKIR (99 aa).

Belongs to the class-I aminoacyl-tRNA synthetase family. MetG type 1 subfamily. In terms of assembly, homodimer. It depends on Zn(2+) as a cofactor.

The protein localises to the cytoplasm. It catalyses the reaction tRNA(Met) + L-methionine + ATP = L-methionyl-tRNA(Met) + AMP + diphosphate. Functionally, is required not only for elongation of protein synthesis but also for the initiation of all mRNA translation through initiator tRNA(fMet) aminoacylation. The chain is Methionine--tRNA ligase from Methanospirillum hungatei JF-1 (strain ATCC 27890 / DSM 864 / NBRC 100397 / JF-1).